The chain runs to 369 residues: Cyclin-dependent kinase 5 activator 2 (369 aa).

Polar residues predominate over residues 1–11; it reads MGTVLSLSPAS. 3 disordered regions span residues 1 to 55, 72 to 176, and 330 to 369; these read MGTV…SRLK, ASAK…SPRR, and EAAA…NLDR. G2 carries N-myristoyl glycine lipidation. Residues 74–84 show a composition bias toward basic residues; it reads AKKKKGSKKVT. Position 84 is a phosphothreonine (T84). Over residues 99–112 the composition is skewed to basic and acidic residues; sequence RNRENLLRKGRDGP. The span at 122–144 shows a compositional bias: low complexity; the sequence is AVPVPTVPTTAATCEPPSGGSAA. Residues 145–171 show a composition bias toward pro residues; sequence APPPGSGGGKPPPPPPPAPQAAPPAPG. The span at 331–352 shows a compositional bias: low complexity; the sequence is AAASTGGPPSGSSASTTSSSSA.

This sequence belongs to the cyclin-dependent kinase 5 activator family. As to quaternary structure, heterodimer of a catalytic subunit and a regulatory subunit. In terms of processing, myristoylated. The Gly-2-Ala mutant is absent of the cell periphery, suggesting that a proper myristoylation signal is essential for the proper distribution of CDK5R2 (p39).

The protein localises to the cell membrane. In terms of biological role, activator of CDK5/TPKII. This is Cyclin-dependent kinase 5 activator 2 (Cdk5r2) from Mus musculus (Mouse).